The sequence spans 142 residues: 2-aminomuconate deaminase (142 aa).

The protein belongs to the 2-aminomuconate deaminase family. In terms of assembly, homotetramer.

The enzyme catalyses (2Z,4E)-2-aminomuconate + H2O = (3E)-2-oxohex-3-enedioate + NH4(+). With respect to regulation, slightly inhibited by Pb(2+), Hg(+) and Cu(2+). In terms of biological role, involved in the modified meta-cleavage pathway for the 2-aminophenol catabolism. Only active toward 2-aminomuconic acid. The chain is 2-aminomuconate deaminase (amnD) from Pseudomonas sp.